The primary structure comprises 504 residues: Glycerol kinase (504 aa).

Thr-12 is an ADP binding site. The ATP site is built by Thr-12, Thr-13, and Ser-14. Residue Thr-12 participates in sn-glycerol 3-phosphate binding. Arg-16 lines the ADP pocket. Sn-glycerol 3-phosphate-binding residues include Arg-82, Glu-83, Tyr-134, and Asp-244. Positions 82, 83, 134, 244, and 245 each coordinate glycerol. Positions 266 and 309 each coordinate ADP. 4 residues coordinate ATP: Thr-266, Gly-309, Gln-313, and Gly-410. Gly-410 and Asn-414 together coordinate ADP.

It belongs to the FGGY kinase family. As to quaternary structure, homotetramer and homodimer (in equilibrium).

The catalysed reaction is glycerol + ATP = sn-glycerol 3-phosphate + ADP + H(+). The protein operates within polyol metabolism; glycerol degradation via glycerol kinase pathway; sn-glycerol 3-phosphate from glycerol: step 1/1. With respect to regulation, activated by phosphorylation and inhibited by fructose 1,6-bisphosphate (FBP). In terms of biological role, key enzyme in the regulation of glycerol uptake and metabolism. Catalyzes the phosphorylation of glycerol to yield sn-glycerol 3-phosphate. This is Glycerol kinase from Alkaliphilus oremlandii (strain OhILAs) (Clostridium oremlandii (strain OhILAs)).